The chain runs to 177 residues: MTKESLEKATFAGGCFWCMVKPFDTQPGIEKVVSGYTGGHTVNPTYKEVCSGTTGHTEAIQITFDPAVFPYEKLVEVYWQQTDPTDAAGQFVDRGDSYRPVIFYHNEEQKEIAEKSKAALDASGRFKKPIVTEIAKAETFYPAEEYHQDFYKKEKAHYEGYQVASGRAAFIDANWKG.

Cys15 is an active-site residue.

It belongs to the MsrA Met sulfoxide reductase family.

The enzyme catalyses L-methionyl-[protein] + [thioredoxin]-disulfide + H2O = L-methionyl-(S)-S-oxide-[protein] + [thioredoxin]-dithiol. It catalyses the reaction [thioredoxin]-disulfide + L-methionine + H2O = L-methionine (S)-S-oxide + [thioredoxin]-dithiol. Functionally, has an important function as a repair enzyme for proteins that have been inactivated by oxidation. Catalyzes the reversible oxidation-reduction of methionine sulfoxide in proteins to methionine. This Listeria monocytogenes serotype 4a (strain HCC23) protein is Peptide methionine sulfoxide reductase MsrA.